Consider the following 486-residue polypeptide: Vesicular GABA transporter (486 aa).

Over 1 to 93 (MASNRFQNLQ…EASEPISALQ (93 aa)) the chain is Cytoplasmic. Positions 29–46 (LNEVPSYQNQPQTGESGS) are enriched in polar residues. The interval 29–85 (LNEVPSYQNQPQTGESGSNPPPHDRLEPIQESVVSEQPQKDDINKQEEAKDDGHGEA) is disordered. The span at 66–85 (PQKDDINKQEEAKDDGHGEA) shows a compositional bias: basic and acidic residues. The chain crosses the membrane as a helical span at residues 94-114 (AAWNVTNAIQGMFIVGLPIAV). Residues 115-119 (KVGGW) are Lumenal, vesicle-facing. Residues 120 to 140 (WSIGAMVGVAYVCYWTGVLLI) traverse the membrane as a helical segment. Topologically, residues 141–167 (ECLYENGVKKRKTYREIADFYKPGFGK) are cytoplasmic. The chain crosses the membrane as a helical span at residues 168-188 (WVLAAQLTELLSTCIIYLVLA). Over 189-203 (ADLLQSCFPSVDKAG) the chain is Lumenal, vesicle. Residues 204–224 (WMMITSASLLTCSFLDDLQIV) form a helical membrane-spanning segment. Residues 225 to 228 (SRLS) lie on the Cytoplasmic side of the membrane. Residues 229-249 (FFNAISHLIVNLIMVLYCLSF) form a helical membrane-spanning segment. The Lumenal, vesicle segment spans residues 250 to 263 (VSQWSFSTITFSLN). Residues 264–284 (INTLPTIVGMVVFGYTSHIFL) traverse the membrane as a helical segment. The Cytoplasmic portion of the chain corresponds to 285-305 (PNLEGNMKNPAQFNVMLKWSH). The chain crosses the membrane as a helical span at residues 306–326 (IAAAVFKVVFGMLGFLTFGEL). Residues 327-341 (TQEEISNSLPNQSFK) lie on the Lumenal, vesicle side of the membrane. An N-linked (GlcNAc...) asparagine glycan is attached at N337. Residues 342–362 (ILVNLILVVKALLSYPLPFYA) traverse the membrane as a helical segment. Residues 363–398 (AVQLLKNNLFLGYPQTPFTSCYSPDKSLREWAVTLR) lie on the Cytoplasmic side of the membrane. Residues 399-419 (IILVLFTLFVALSVPYLVELM) traverse the membrane as a helical segment. The Lumenal, vesicle segment spans residues 420 to 421 (GL). Residues 422–442 (VGNITGTMLSFIWPALFHLYI) form a helical membrane-spanning segment. At 443–457 (KEKTLNNFEKRFDQG) the chain is on the cytoplasmic side. The chain crosses the membrane as a helical span at residues 458–478 (IIIMGCSVCISGVYFSSMELL). Residues 479–486 (RAINSADS) lie on the Lumenal, vesicle side of the membrane.

It belongs to the amino acid/polyamine transporter 2 family.

The protein localises to the cytoplasmic vesicle membrane. Its function is as follows. Involved in the uptake of GABA into the synaptic vesicles. The protein is Vesicular GABA transporter (unc-47) of Caenorhabditis elegans.